We begin with the raw amino-acid sequence, 405 residues long: Tryptophan synthase beta chain (405 aa).

Lysine 96 carries the N6-(pyridoxal phosphate)lysine modification.

This sequence belongs to the TrpB family. In terms of assembly, tetramer of two alpha and two beta chains. Pyridoxal 5'-phosphate serves as cofactor.

The catalysed reaction is (1S,2R)-1-C-(indol-3-yl)glycerol 3-phosphate + L-serine = D-glyceraldehyde 3-phosphate + L-tryptophan + H2O. The protein operates within amino-acid biosynthesis; L-tryptophan biosynthesis; L-tryptophan from chorismate: step 5/5. In terms of biological role, the beta subunit is responsible for the synthesis of L-tryptophan from indole and L-serine. This Clostridium botulinum (strain Alaska E43 / Type E3) protein is Tryptophan synthase beta chain.